We begin with the raw amino-acid sequence, 531 residues long: Putative F-box protein At2g02890 (531 aa).

The region spanning 141–188 is the F-box domain; that stretch reads RHSSSLTNDLIEEILSRLHSKSVARFRCVSKQCASMFASPYFKKLFQT.

This is Putative F-box protein At2g02890 from Arabidopsis thaliana (Mouse-ear cress).